The chain runs to 290 residues: 4-hydroxy-tetrahydrodipicolinate synthase (290 aa).

Residue Thr-44 coordinates pyruvate. Catalysis depends on Tyr-132, which acts as the Proton donor/acceptor. Lys-160 serves as the catalytic Schiff-base intermediate with substrate. Ile-202 is a binding site for pyruvate.

Belongs to the DapA family. As to quaternary structure, homotetramer; dimer of dimers.

The protein localises to the cytoplasm. It catalyses the reaction L-aspartate 4-semialdehyde + pyruvate = (2S,4S)-4-hydroxy-2,3,4,5-tetrahydrodipicolinate + H2O + H(+). It functions in the pathway amino-acid biosynthesis; L-lysine biosynthesis via DAP pathway; (S)-tetrahydrodipicolinate from L-aspartate: step 3/4. Functionally, catalyzes the condensation of (S)-aspartate-beta-semialdehyde [(S)-ASA] and pyruvate to 4-hydroxy-tetrahydrodipicolinate (HTPA). This is 4-hydroxy-tetrahydrodipicolinate synthase from Alkaliphilus oremlandii (strain OhILAs) (Clostridium oremlandii (strain OhILAs)).